We begin with the raw amino-acid sequence, 106 residues long: Met repressor (106 aa).

Belongs to the MetJ family. In terms of assembly, homodimer.

It is found in the cytoplasm. In terms of biological role, this regulatory protein, when combined with SAM (S-adenosylmethionine) represses the expression of the methionine regulon and of enzymes involved in SAM synthesis. The chain is Met repressor from Vibrio atlanticus (strain LGP32) (Vibrio splendidus (strain Mel32)).